A 266-amino-acid polypeptide reads, in one-letter code: uncharacterized protein (266 aa).

Positions 1–22 are cleaved as a signal peptide; the sequence is MRYLKKLAWFISVIILGIFIIG. C23 is lipidated: N-palmitoyl cysteine. Residue C23 is the site of S-diacylglycerol cysteine attachment.

This sequence belongs to the staphylococcal tandem lipoprotein family.

It is found in the cell membrane. This is an uncharacterized protein from Staphylococcus aureus (strain USA300).